Reading from the N-terminus, the 367-residue chain is Tetraacyldisaccharide 4'-kinase (367 aa).

68-75 contacts ATP; sequence VLGGSGKT.

The protein belongs to the LpxK family.

The enzyme catalyses a lipid A disaccharide + ATP = a lipid IVA + ADP + H(+). Its pathway is glycolipid biosynthesis; lipid IV(A) biosynthesis; lipid IV(A) from (3R)-3-hydroxytetradecanoyl-[acyl-carrier-protein] and UDP-N-acetyl-alpha-D-glucosamine: step 6/6. Functionally, transfers the gamma-phosphate of ATP to the 4'-position of a tetraacyldisaccharide 1-phosphate intermediate (termed DS-1-P) to form tetraacyldisaccharide 1,4'-bis-phosphate (lipid IVA). This chain is Tetraacyldisaccharide 4'-kinase, found in Chlamydia caviae (strain ATCC VR-813 / DSM 19441 / 03DC25 / GPIC) (Chlamydophila caviae).